The sequence spans 311 residues: 1D-myo-inositol 2-acetamido-2-deoxy-alpha-D-glucopyranoside deacetylase (311 aa).

Zn(2+)-binding residues include His-29, Asp-32, and His-162.

It belongs to the MshB deacetylase family. It depends on Zn(2+) as a cofactor.

The enzyme catalyses 1D-myo-inositol 2-acetamido-2-deoxy-alpha-D-glucopyranoside + H2O = 1D-myo-inositol 2-amino-2-deoxy-alpha-D-glucopyranoside + acetate. Its function is as follows. Catalyzes the deacetylation of 1D-myo-inositol 2-acetamido-2-deoxy-alpha-D-glucopyranoside (GlcNAc-Ins) in the mycothiol biosynthesis pathway. The protein is 1D-myo-inositol 2-acetamido-2-deoxy-alpha-D-glucopyranoside deacetylase of Corynebacterium efficiens (strain DSM 44549 / YS-314 / AJ 12310 / JCM 11189 / NBRC 100395).